Here is a 496-residue protein sequence, read N- to C-terminus: L-arabinose isomerase (496 aa).

Residues E302, E329, H346, and H445 each coordinate Mn(2+).

Belongs to the arabinose isomerase family. It depends on Mn(2+) as a cofactor.

It carries out the reaction beta-L-arabinopyranose = L-ribulose. Its pathway is carbohydrate degradation; L-arabinose degradation via L-ribulose; D-xylulose 5-phosphate from L-arabinose (bacterial route): step 1/3. Its function is as follows. Catalyzes the conversion of L-arabinose to L-ribulose. The protein is L-arabinose isomerase of Thermotoga sp. (strain RQ2).